The following is a 274-amino-acid chain: Diaminopimelate epimerase (274 aa).

The substrate site is built by N11, Q44, and N64. C73 serves as the catalytic Proton donor. Residues 74-75 (GN), N157, N190, and 208-209 (ER) each bind substrate. The active-site Proton acceptor is the C217. Substrate is bound at residue 218–219 (GS).

This sequence belongs to the diaminopimelate epimerase family. As to quaternary structure, homodimer.

The protein localises to the cytoplasm. It carries out the reaction (2S,6S)-2,6-diaminopimelate = meso-2,6-diaminopimelate. The protein operates within amino-acid biosynthesis; L-lysine biosynthesis via DAP pathway; DL-2,6-diaminopimelate from LL-2,6-diaminopimelate: step 1/1. Functionally, catalyzes the stereoinversion of LL-2,6-diaminopimelate (L,L-DAP) to meso-diaminopimelate (meso-DAP), a precursor of L-lysine and an essential component of the bacterial peptidoglycan. The chain is Diaminopimelate epimerase from Shigella boydii serotype 18 (strain CDC 3083-94 / BS512).